Reading from the N-terminus, the 425-residue chain is Enolase (425 aa).

(2R)-2-phosphoglycerate is bound at residue Q163. E205 (proton donor) is an active-site residue. Residues D242, E285, and D312 each contribute to the Mg(2+) site. The (2R)-2-phosphoglycerate site is built by K337, R366, S367, and K388. K337 functions as the Proton acceptor in the catalytic mechanism.

Belongs to the enolase family. The cofactor is Mg(2+).

Its subcellular location is the cytoplasm. It is found in the secreted. It localises to the cell surface. The enzyme catalyses (2R)-2-phosphoglycerate = phosphoenolpyruvate + H2O. It participates in carbohydrate degradation; glycolysis; pyruvate from D-glyceraldehyde 3-phosphate: step 4/5. Its function is as follows. Catalyzes the reversible conversion of 2-phosphoglycerate (2-PG) into phosphoenolpyruvate (PEP). It is essential for the degradation of carbohydrates via glycolysis. In Cereibacter sphaeroides (strain ATCC 17029 / ATH 2.4.9) (Rhodobacter sphaeroides), this protein is Enolase.